Here is a 1782-residue protein sequence, read N- to C-terminus: MGAGSSTEQRSPEQPPEGSSTPAEPEPSGGGPSAEAAPDTTADPAIAASDPATKLLQKNGQLSTINGVAEQDELSLQEGDLNGQKGALNGQGALNSQEEEEVIVTEVGQRDSEDVSKRDSDKEMATKSAVVHDITDDGQEETPEIIEQIPSSESNLEELTQPTESQANDIGFKKVFKFVGFKFTVKKDKTEKPDTVQLLTVKKDEGEGAAGAGDHKDPSLGAGEAASKESEPKQSTEKPEETLKREQSHAEISPPAESGQAVEECKEEGEEKQEKEPSKSAESPTSPVTSETGSTFKKFFTQGWAGWRKKTSFRKPKEDEVEASEKKKEQEPEKVDTEEDGKAEVASEKLTASEQAHPQEPAESAHEPRLSAEYEKVELPSEEQVSGSQGPSEEKPAPLATEVFDEKIEVHQEEVVAEVHVSTVEERTEEQKTEVEETAGSVPAEELVEMDAEPQEAEPAKELVKLKETCVSGEDPTQGADLSPDEKVLSKPPEGVVSEVEMLSSQERMKVQGSPLKKLFTSTGLKKLSGKKQKGKRGGGDEESGEHTQVPADSPDSQEEQKGESSASSPEEPEEITCLEKGLAEVQQDGEAEEGATSDGEKKREGVTPWASFKKMVTPKKRVRRPSESDKEDELDKVKSATLSSTESTASEMQEEMKGSVEEPKPEEPKRKVDTSVSWEALICVGSSKKRARRGSSSDEEGGPKAMGGDHQKADEAGKDKETGTDGILAGSQEHDPGQGSSSPEQAGSPTEGEGVSTWESFKRLVTPRKKSKSKLEEKSEDSIAGSGVEHSTPDTEPGKEESWVSIKKFIPGRRKKRPDGKQEQAPVEDAGPTGANEDDSDVPAVVPLSEYDAVEREKMEAQQAQKSAEQPEQKAATEVSKELSESQVHMMAAAVADGTRAATIIEERSPSWISASVTEPLEQVEAEAALLTEEVLEREVIAEEEPPTVTEPLPENREARGDTVVSEAELTPEAVTAAETAGPLGAEEGTEASAAEETTEMVSAVSQLTDSPDTTEEATPVQEVEGGVPDIEEQERRTQEVLQAVAEKVKEESQLPGTGGPEDVLQPVQRAEAERPEEQAEASGLKKETDVVLKVDAQEAKTEPFTQGKVVGQTTPESFEKAPQVTESIESSELVTTCQAETLAGVKSQEMVMEQAIPPDSVETPTDSETDGSTPVADFDAPGTTQKDEIVEIHEENEVASGTQSGGTEAEAVPAQKERPPAPSSFVFQEETKEQSKMEDTLEHTDKEVSVETVSILSKTEGTQEADQYADEKTKDVPFFEGLEGSIDTGITVSREKVTEVALKGEGTEEAECKKDDALELQSHAKSPPSPVEREMVVQVEREKTEAEPTHVNEEKLEHETAVTVSEEVSKQLLQTVNVPIIDGAKEVSSLEGSPPPCLGQEEAVCTKIQVQSSEASFTLTAAAEEEKVLGETANILETGETLEPAGAHLVLEEKSSEKNEDFAAHPGEDAVPTGPDCQAKSTPVIVSATTKKGLSSDLEGEKTTSLKWKSDEVDEQVACQEVKVSVAIEDLEPENGILELETKSSKLVQNIIQTAVDQFVRTEETATEMLTSELQTQAHVIKADSQDAGQETEKEGEEPQASAQDETPITSAKEESESTAVGQAHSDISKDMSEASEKTMTVEVEGSTVNDQQLEEVVLPSEEEGGGAGTKSVPEDDGHALLAERIEKSLVEPKEDEKGDDVDDPENQNSALADTDASGGLTKESPDTNGPKQKEKEDAQEVELQEGKVHSESDKAITPQAQEELQKQERESAKSELTES.

8 disordered regions span residues 1 to 53 (MGAG…DPAT), 71 to 169 (QDEL…QAND), 189 to 400 (KTEK…APLA), 421 to 886 (VSTV…ELSE), 938 to 1089 (EREV…LKKE), 1105 to 1134 (PFTQ…ESSE), 1157 to 1274 (AIPP…ADEK), and 1305 to 1355 (KGEG…HVNE). Gly-2 is lipidated: N-myristoyl glycine. A phosphoserine mark is found at Ser-11, Ser-19, Ser-28, Ser-75, and Ser-96. A compositionally biased stretch (low complexity) spans 16 to 53 (PEGSSTPAEPEPSGGGPSAEAAPDTTADPAIAASDPAT). The segment covering 108–125 (GQRDSEDVSKRDSDKEMA) has biased composition (basic and acidic residues). Positions 145–154 (IIEQIPSSES) are enriched in low complexity. Ser-154 bears the Phosphoserine mark. The segment covering 157 to 168 (EELTQPTESQAN) has biased composition (polar residues). A phosphoserine mark is found at Ser-219, Ser-248, Ser-258, Ser-280, Ser-283, Ser-286, Ser-347, and Ser-371. Positions 226–249 (ASKESEPKQSTEKPEETLKREQSH) are enriched in basic and acidic residues. The tract at residues 266-557 (KEEGEEKQEK…TQVPADSPDS (292 aa)) is involved in PKC-binding. Basic and acidic residues-rich tracts occupy residues 315-347 (KPKE…EVAS) and 363-379 (ESAH…KVEL). At Tyr-374 the chain carries Phosphotyrosine. 2 positions are modified to phosphoserine: Ser-381 and Ser-392. The segment covering 423–435 (TVEERTEEQKTEV) has biased composition (basic and acidic residues). A compositionally biased stretch (acidic residues) spans 446–456 (ELVEMDAEPQE). A compositionally biased stretch (basic and acidic residues) spans 458 to 468 (EPAKELVKLKE). A phosphoserine mark is found at Ser-483 and Ser-505. Positions 528–537 (LSGKKQKGKR) are enriched in basic residues. Residues Ser-554, Ser-557, Ser-598, Ser-612, Ser-627, and Ser-629 each carry the phosphoserine modification. The AKAP CaM-binding 1 motif lies at 607–627 (VTPWASFKKMVTPKKRVRRPS). The segment covering 625-639 (RPSESDKEDELDKVK) has biased composition (basic and acidic residues). Over residues 640–652 (SATLSSTESTASE) the composition is skewed to low complexity. Phosphothreonine is present on Thr-642. A phosphoserine mark is found at Ser-644, Ser-645, Ser-648, and Ser-651. Positions 655–674 (EEMKGSVEEPKPEEPKRKVD) are enriched in basic and acidic residues. Residues Ser-696, Ser-697, and Ser-698 each carry the phosphoserine modification. Residues 708–724 (GGDHQKADEAGKDKETG) show a composition bias toward basic and acidic residues. A compositionally biased stretch (polar residues) spans 739 to 749 (QGSSSPEQAGS). Phosphoserine occurs at positions 749, 761, and 787. The short motif at 756–776 (VSTWESFKRLVTPRKKSKSKL) is the AKAP CaM-binding 2 element. Basic and acidic residues predominate over residues 792 to 803 (STPDTEPGKEES). Residues 801–821 (EESWVSIKKFIPGRRKKRPDG) carry the AKAP CaM-binding 3 motif. The residue at position 806 (Ser-806) is a Phosphoserine. Positions 986–997 (GAEEGTEASAAE) are enriched in low complexity. A Glycyl lysine isopeptide (Lys-Gly) (interchain with G-Cter in SUMO1) cross-link involves residue Lys-1051. Positions 1072–1089 (AEAERPEEQAEASGLKKE) are enriched in basic and acidic residues. A compositionally biased stretch (polar residues) spans 1164 to 1174 (ETPTDSETDGS). Composition is skewed to basic and acidic residues over residues 1187–1198 (QKDEIVEIHEEN) and 1231–1251 (EETK…KEVS). A compositionally biased stretch (polar residues) spans 1253 to 1267 (ETVSILSKTEGTQEA). Phosphoserine is present on residues Ser-1328 and Ser-1331. The segment covering 1333–1355 (VEREMVVQVEREKTEAEPTHVNE) has biased composition (basic and acidic residues). A phosphoserine mark is found at Ser-1391 and Ser-1395. The tract at residues 1541–1554 (ELETKSSKLVQNII) is RII-binding. The disordered stretch occupies residues 1584–1782 (KADSQDAGQE…ESAKSELTES (199 aa)). Residue Ser-1587 is modified to Phosphoserine. Residues 1603-1612 (ASAQDETPIT) are compositionally biased toward polar residues. Basic and acidic residues-rich tracts occupy residues 1629–1639 (DISKDMSEASE) and 1675–1699 (VPED…KEDE). Ser-1727 is modified (phosphoserine). Composition is skewed to basic and acidic residues over residues 1734 to 1757 (KQKE…ESDK) and 1766 to 1782 (ELQK…LTES).

Binds to dimeric RII-alpha regulatory subunit of PKC. In terms of tissue distribution, expressed in endothelial cells, cultured fibroblasts and osteosarcoma, but not in platelets, leukocytes, monocytic cell lines or peripherical blood cells.

The protein localises to the cytoplasm. It is found in the cell cortex. It localises to the cytoskeleton. Its subcellular location is the membrane. Anchoring protein that mediates the subcellular compartmentation of protein kinase A (PKA) and protein kinase C (PKC). In Homo sapiens (Human), this protein is A-kinase anchor protein 12 (AKAP12).